We begin with the raw amino-acid sequence, 73 residues long: Salivary thrombin inhibitor XC-42 (73 aa).

Residues 1–23 form the signal peptide; it reads MKLQFLFIFIAFCVMLFAQIATA.

In terms of assembly, interacts with human F2 (thrombin). In terms of tissue distribution, salivary gland (at protein level).

It is found in the secreted. Acts as a competitive inhibitor of host thrombin. The protein is Salivary thrombin inhibitor XC-42 of Xenopsylla cheopis (Oriental rat flea).